The primary structure comprises 181 residues: Coatomer subunit zeta-3 (181 aa).

Belongs to the adaptor complexes small subunit family. In terms of assembly, oligomeric complex that consists of at least the alpha, beta, beta', gamma, delta, epsilon and zeta subunits.

It is found in the cytoplasm. It localises to the golgi apparatus membrane. The protein localises to the cytoplasmic vesicle. Its subcellular location is the COPI-coated vesicle membrane. Functionally, the coatomer is a cytosolic protein complex that binds to dilysine motifs and reversibly associates with Golgi non-clathrin-coated vesicles, which further mediate biosynthetic protein transport from the ER, via the Golgi up to the trans Golgi network. Coatomer complex is required for budding from Golgi membranes, and is essential for the retrograde Golgi-to-ER transport of dilysine-tagged proteins. The zeta subunit may be involved in regulating the coat assembly and, hence, the rate of biosynthetic protein transport due to its association-dissociation properties with the coatomer complex. The protein is Coatomer subunit zeta-3 of Arabidopsis thaliana (Mouse-ear cress).